The following is a 197-amino-acid chain: LexA repressor (197 aa).

The H-T-H motif DNA-binding region spans 28-47; sequence VREIARRFRITPRGALLHLI. Active-site for autocatalytic cleavage activity residues include S119 and K156.

Belongs to the peptidase S24 family. In terms of assembly, homodimer.

It carries out the reaction Hydrolysis of Ala-|-Gly bond in repressor LexA.. Its function is as follows. Represses a number of genes involved in the response to DNA damage (SOS response), including recA and lexA. In the presence of single-stranded DNA, RecA interacts with LexA causing an autocatalytic cleavage which disrupts the DNA-binding part of LexA, leading to derepression of the SOS regulon and eventually DNA repair. The polypeptide is LexA repressor (Thermotoga maritima (strain ATCC 43589 / DSM 3109 / JCM 10099 / NBRC 100826 / MSB8)).